The following is a 429-amino-acid chain: MVDVEEKSQEVEYVDPTVNRVPNYEVSEKAFLLTQSKVSIEQRKEAAEFVLAKIKEEEMAPYYKYLCEEYLVNNGQSDLEHDEKSDSLNEWIKFDQELYNELCKKNESKIKELNEKIQKLEEDDEGELEQAQAWINLGEYYAQIGDKDNAEKTLGKSLSKAISTGAKIDVMLTIARLGFFYNDQLYVKEKLEAVNSMIEKGGDWERRNRYKTYYGIHCLAVRNFKEAAKLLVDSLATFTSIELTSYESIATYASVTGLFTLERTDLKSKVIDSPELLSLISTTAALQSISSLTISLYASDYASYFPYLLETYANVLIPCKYLNRHADFFVREMRRKVYAQLLESYKTLSLKSMASAFGVSVAFLDNDLGKFIPNKQLNCVIDRVNGIVETNRPDNKNAQYHLLVKQGDGLLTKLQKYGAAVRLTGSDRV.

Residues S8 and S77 each carry the phosphoserine modification. The stretch at 131–164 (AQAWINLGEYYAQIGDKDNAEKTLGKSLSKAIST) is one TPR repeat. The PCI domain occupies 223 to 395 (NFKEAAKLLV…GIVETNRPDN (173 aa)).

The 26S proteasome is composed of a core protease, known as the 20S proteasome, capped at one or both ends by the 19S regulatory complex (RC). The RC is composed of at least 18 different subunits in two subcomplexes, the base and the lid, which form the portions proximal and distal to the 20S proteolytic core, respectively. Component of the lid subcomplex of the 19S RC.

It is found in the nucleus. Component of the 19S cap proteasome complex which acts as a regulatory subunit of the 26S proteasome, involved in the ATP-dependent degradation of ubiquitinated proteins. In Saccharomyces cerevisiae (strain ATCC 204508 / S288c) (Baker's yeast), this protein is 26S proteasome regulatory subunit RPN7.